We begin with the raw amino-acid sequence, 358 residues long: Probable tartrate dehydrogenase/decarboxylase TtuC' (358 aa).

Positions 222, 246, and 250 each coordinate Mn(2+).

The protein belongs to the isocitrate and isopropylmalate dehydrogenases family. Mg(2+) serves as cofactor. It depends on Mn(2+) as a cofactor. K(+) is required as a cofactor.

The protein localises to the cytoplasm. It carries out the reaction tartrate + NAD(+) = 2-hydroxy-3-oxosuccinate + NADH + H(+). It catalyses the reaction (2R,3S)-tartrate + NAD(+) = 2-hydroxy-3-oxosuccinate + NADH + H(+). The catalysed reaction is (2R,3R)-tartrate + NAD(+) = 2-hydroxy-3-oxosuccinate + NADH + H(+). The enzyme catalyses (2R,3R)-tartrate + H(+) = (R)-glycerate + CO2. It carries out the reaction (R)-malate + NAD(+) = pyruvate + CO2 + NADH. It functions in the pathway carbohydrate acid metabolism; tartrate degradation; 2-hydroxy-3-oxosuccinate from L-tartrate: step 1/1. Its pathway is carbohydrate acid metabolism; tartrate degradation; 2-hydroxy-3-oxosuccinate from meso-tartrate: step 1/1. It participates in carbohydrate acid metabolism; tartrate degradation; D-glycerate from L-tartrate: step 1/1. Has multiple catalytic activities. Apart from catalyzing the oxidation of (+)-tartrate to oxaloglycolate, also converts meso-tartrate to D-glycerate and catalyzes the oxidative decarboxylation of D-malate to pyruvate. The sequence is that of Probable tartrate dehydrogenase/decarboxylase TtuC' (ttuC') from Agrobacterium vitis (Rhizobium vitis).